Consider the following 552-residue polypeptide: MKGCLATMDKELWIERANDSLVKHFYEQQSGIEQRDGFESKLTFGTAGIRGKFGLGEGRLNKFTIEKLALGLARYLNAQTNNPTIVIHYDIRHLSTEFAQIIANVLANHQITVYLPDTYKTTPELSFAVRNLNTAAGIMITASHNPKDYNGIKVYGSDGAQLSTDASELASRYIEEVGDPLQIDIPISKQNTSYIKPFPKSVTDDYMKHIQNMIGYIPKSDLQVVFTSLHGTSVPIVPELLQSLNFNQFNLVEAQCKPDPNFSSVQSANPEDHRAFDQAVELANKSHADLLISTDPDADRLGIAECDAHGHITYFNGNQIGALLLNYRIQQTSQLRHRLMIQSIVSSELTKSLARYNNVEYKEVLTGFKFIAQEIRQLDDHQNMIFAFEESYGFLSEPFVRDKDAVQIVPLIIKYASELKLYGKTLKDALEQIYQTVGRHEDTLFSHTLEGLEGKKKINAIMTKFRSNPPQEIQGLKVKAIEDYLTSEVYQLDKDTTSQINSPKSNVIRVLFDEGFIALRPSGTEPKIKLYVSLKCPNFDDVAQKINAMIFS.

The active-site Phosphoserine intermediate is Ser-143. Mg(2+) is bound by residues Ser-143, Asp-295, Asp-297, and Asp-299.

This sequence belongs to the phosphohexose mutase family. It depends on Mg(2+) as a cofactor.

It carries out the reaction alpha-D-glucose 1-phosphate = alpha-D-glucose 6-phosphate. It participates in glycolipid metabolism; diglucosyl-diacylglycerol biosynthesis. In terms of biological role, catalyzes the interconversion between glucose-6-phosphate and alpha-glucose-1-phosphate. This is the first step in the biosynthesis of diglucosyl-diacylglycerol (Glc2-DAG), i.e. the predominant glycolipid found in the S.aureus membrane, which is also used as a membrane anchor for lipoteichoic acid (LTA). In Staphylococcus aureus (strain bovine RF122 / ET3-1), this protein is Phosphoglucomutase (pgcA).